Reading from the N-terminus, the 178-residue chain is Cytochrome b6-f complex iron-sulfur subunit 1 (178 aa).

A helical transmembrane segment spans residues 17–36 (LLNFLAGTTVAVTASAGAYA). Residues 61-161 (GNPIPASQIL…VAVVDDQIFI (101 aa)) form the Rieske domain. [2Fe-2S] cluster-binding residues include Cys107, His109, Cys125, and His128. Cys112 and Cys127 are joined by a disulfide.

The protein belongs to the Rieske iron-sulfur protein family. In terms of assembly, the 4 large subunits of the cytochrome b6-f complex are cytochrome b6, subunit IV (17 kDa polypeptide, PetD), cytochrome f and the Rieske protein, while the 4 small subunits are PetG, PetL, PetM and PetN. The complex functions as a dimer. The cofactor is [2Fe-2S] cluster.

It is found in the cellular thylakoid membrane. The catalysed reaction is 2 oxidized [plastocyanin] + a plastoquinol + 2 H(+)(in) = 2 reduced [plastocyanin] + a plastoquinone + 4 H(+)(out). In terms of biological role, component of the cytochrome b6-f complex, which mediates electron transfer between photosystem II (PSII) and photosystem I (PSI), cyclic electron flow around PSI, and state transitions. This chain is Cytochrome b6-f complex iron-sulfur subunit 1, found in Synechocystis sp. (strain ATCC 27184 / PCC 6803 / Kazusa).